Reading from the N-terminus, the 270-residue chain is Mediator of RNA polymerase II transcription subunit 4 (270 aa).

Residues 1–22 (MAASSSGEKEKERMGGVSGMTG) are disordered. N-acetylalanine is present on alanine 2. The stretch at 26 to 131 (TRERLLSALE…ATAVYQAKEK (106 aa)) forms a coiled coil. The residue at position 32 (serine 32) is a Phosphoserine. The segment at 227–270 (MSVNMLPPNHSTDFLLEPPGHNKENEDDVEVMSTDSSSSSSDSD) is disordered. Residues 259–270 (STDSSSSSSDSD) show a composition bias toward low complexity.

This sequence belongs to the Mediator complex subunit 4 family. Component of the Mediator complex, which is composed of MED1, MED4, MED6, MED7, MED8, MED9, MED10, MED11, MED12, MED13, MED13L, MED14, MED15, MED16, MED17, MED18, MED19, MED20, MED21, MED22, MED23, MED24, MED25, MED26, MED27, MED29, MED30, MED31, CCNC, CDK8 and CDC2L6/CDK11. The MED12, MED13, CCNC and CDK8 subunits form a distinct module termed the CDK8 module. Mediator containing the CDK8 module is less active than Mediator lacking this module in supporting transcriptional activation. Individual preparations of the Mediator complex lacking one or more distinct subunits have been variously termed ARC, CRSP, DRIP, PC2, SMCC and TRAP.

It localises to the nucleus. Its function is as follows. Component of the Mediator complex, a coactivator involved in the regulated transcription of nearly all RNA polymerase II-dependent genes. Mediator functions as a bridge to convey information from gene-specific regulatory proteins to the basal RNA polymerase II transcription machinery. Mediator is recruited to promoters by direct interactions with regulatory proteins and serves as a scaffold for the assembly of a functional preinitiation complex with RNA polymerase II and the general transcription factors. In Rattus norvegicus (Rat), this protein is Mediator of RNA polymerase II transcription subunit 4 (Med4).